A 483-amino-acid chain; its full sequence is Matrix metalloproteinase-20 (483 aa).

The first 22 residues, 1 to 22 (MKVLPASGLAVFLIMALKFSTA), serve as a signal peptide directing secretion. Residues 23-107 (APSLVAASPR…PRCGVPDVAN (85 aa)) constitute a propeptide that is removed on maturation. The short motif at 98–105 (PRCGVPDV) is the Cysteine switch element. Residue Cys100 coordinates Zn(2+). The Ca(2+) site is built by Glu164, Ala165, and Asp166. Residues His176 and Asp178 each contribute to the Zn(2+) site. Ca(2+)-binding residues include Asp183, Gly184, Arg186, and Thr188. His191 lines the Zn(2+) pocket. Positions 197, 198, 200, and 202 each coordinate Ca(2+). His204 contributes to the Zn(2+) binding site. Residues Asp206 and Glu209 each contribute to the Ca(2+) site. Position 226 (His226) interacts with Zn(2+). Residue Glu227 is part of the active site. The Zn(2+) site is built by His230 and His236. 4 Hemopexin repeats span residues 293–343 (PDLC…FPQL), 344–389 (MSNV…GFPR), 391–439 (VQQI…FSGV), and 440–483 (NGQI…WIGC). The cysteines at positions 296 and 483 are disulfide-linked.

The protein belongs to the peptidase M10A family. It depends on Zn(2+) as a cofactor. Requires Ca(2+) as cofactor. In terms of processing, autoactivates at least at the 107-Asn-|-Tyr-108 site. As to expression, expressed specifically in the enamel organ.

It is found in the secreted. The protein localises to the extracellular space. The protein resides in the extracellular matrix. In terms of biological role, degrades amelogenin, the major protein component of the enamel matrix and two of the macromolecules characterizing the cartilage extracellular matrix: aggrecan and the cartilage oligomeric matrix protein (COMP). May play a central role in tooth enamel formation. Cleaves aggrecan at the '360-Asn-|-Phe-361' site. The chain is Matrix metalloproteinase-20 (MMP20) from Homo sapiens (Human).